Reading from the N-terminus, the 241-residue chain is tRNA pseudouridine synthase B (241 aa).

The Nucleophile role is filled by Asp45.

The protein belongs to the pseudouridine synthase TruB family. Type 1 subfamily.

It catalyses the reaction uridine(55) in tRNA = pseudouridine(55) in tRNA. In terms of biological role, responsible for synthesis of pseudouridine from uracil-55 in the psi GC loop of transfer RNAs. The sequence is that of tRNA pseudouridine synthase B from Chlamydia muridarum (strain MoPn / Nigg).